Reading from the N-terminus, the 156-residue chain is SsrA-binding protein (156 aa).

It belongs to the SmpB family.

Its subcellular location is the cytoplasm. Its function is as follows. Required for rescue of stalled ribosomes mediated by trans-translation. Binds to transfer-messenger RNA (tmRNA), required for stable association of tmRNA with ribosomes. tmRNA and SmpB together mimic tRNA shape, replacing the anticodon stem-loop with SmpB. tmRNA is encoded by the ssrA gene; the 2 termini fold to resemble tRNA(Ala) and it encodes a 'tag peptide', a short internal open reading frame. During trans-translation Ala-aminoacylated tmRNA acts like a tRNA, entering the A-site of stalled ribosomes, displacing the stalled mRNA. The ribosome then switches to translate the ORF on the tmRNA; the nascent peptide is terminated with the 'tag peptide' encoded by the tmRNA and targeted for degradation. The ribosome is freed to recommence translation, which seems to be the essential function of trans-translation. The polypeptide is SsrA-binding protein (Bacillus velezensis (strain DSM 23117 / BGSC 10A6 / LMG 26770 / FZB42) (Bacillus amyloliquefaciens subsp. plantarum)).